The following is a 354-amino-acid chain: MKKFTLDYLSPRVVFGAGTASALPDEIGRLGARRPLVLSSPEQRELAKDIVRPIGDRVAGYFDGATMHVPVDVIQKAERAFNDTDADSIIAIGGGSTTGLAKILSMNLDVPSLVIPTTYAGSEMTTIWGVTEGGMKRTGRDPKVLPKTVIYDPLLTVDLPLAISVTSALNAIAHAAEGLYSADLNPVLETMCKQGICALFDAIPRLVAKPTDAEARTDALFGAWMCGTALCHLGMGLHHKLCHTLGGTLNLPHAETHAIVLPHALAYNLPYAAPAERLLQEVAGSSDVPSALYDLARNAGAPLSLAEIGMRPEDIPRVRDLALRDQYPNPRPLESDALETLLVNAFRGRRPDFK.

The protein belongs to the iron-containing alcohol dehydrogenase family. As to quaternary structure, homodimer.

It catalyses the reaction 3-oxoadipate + NAD(+) = maleylacetate + NADH + H(+). The catalysed reaction is 3-oxoadipate + NADP(+) = maleylacetate + NADPH + H(+). It participates in aromatic compound metabolism; 3-chlorocatechol degradation. This Cupriavidus pinatubonensis (strain JMP 134 / LMG 1197) (Cupriavidus necator (strain JMP 134)) protein is Maleylacetate reductase 1 (tfdFI).